The following is a 296-amino-acid chain: MAFKYHKVAIVGKHYKKEVSQMVETLYAYLQQQGLEIIIENDTAADTSLVNVAIASLKEIALRCDVAIVVGGDGNFLKASRLLALYSNIPVIGINKGKLGFLTTLAADDNALKNDLYAILKGDSSVTKMSMLKYRVDNNLRAPLEASIALNEIAITASRGLMFGLKVFIDGRYAFDQRGDGLIVSTPTGSTAHAMSAGGPILNPNQNSVVLVPICSHSLNSRPLVISDESVIDIYITDYNDPEPVLSIDGRHDTILKAHQKVTIQKARKKVTVLHTKDYNYYDTLREKLGWSKVLF.

Aspartate 73 (proton acceptor) is an active-site residue. NAD(+)-binding positions include 73–74, lysine 78, 151–152, arginine 178, aspartate 180, and 191–196; these read DG, NE, and TAHAMS.

Belongs to the NAD kinase family. A divalent metal cation serves as cofactor.

The protein resides in the cytoplasm. It carries out the reaction NAD(+) + ATP = ADP + NADP(+) + H(+). Its function is as follows. Involved in the regulation of the intracellular balance of NAD and NADP, and is a key enzyme in the biosynthesis of NADP. Catalyzes specifically the phosphorylation on 2'-hydroxyl of the adenosine moiety of NAD to yield NADP. The polypeptide is NAD kinase (Francisella tularensis subsp. mediasiatica (strain FSC147)).